The primary structure comprises 362 residues: DNA polymerase IV (362 aa).

The UmuC domain occupies 6-187; it reads IIHVDMDAFY…LPVSSFHGVG (182 aa). Aspartate 10 and aspartate 105 together coordinate Mg(2+). Glutamate 106 is a catalytic residue.

This sequence belongs to the DNA polymerase type-Y family. As to quaternary structure, monomer. The cofactor is Mg(2+).

The protein resides in the cytoplasm. It carries out the reaction DNA(n) + a 2'-deoxyribonucleoside 5'-triphosphate = DNA(n+1) + diphosphate. Poorly processive, error-prone DNA polymerase involved in untargeted mutagenesis. Copies undamaged DNA at stalled replication forks, which arise in vivo from mismatched or misaligned primer ends. These misaligned primers can be extended by PolIV. Exhibits no 3'-5' exonuclease (proofreading) activity. May be involved in translesional synthesis, in conjunction with the beta clamp from PolIII. This Leptospira interrogans serogroup Icterohaemorrhagiae serovar copenhageni (strain Fiocruz L1-130) protein is DNA polymerase IV.